A 3122-amino-acid polypeptide reads, in one-letter code: Laminin subunit alpha-2 (3122 aa).

The signal sequence occupies residues 1-22; that stretch reads MPGAAGVLLLLLLSGGLGGVQA. The Laminin N-terminal domain maps to 35–286; that stretch reads QQRGLFPAVL…SVKDISVGGM (252 aa). Asn55 and Asn89 each carry an N-linked (GlcNAc...) asparagine glycan. Intrachain disulfides connect Cys287–Cys296, Cys289–Cys307, Cys309–Cys318, Cys321–Cys341, Cys344–Cys353, and Cys346–Cys378. 4 consecutive Laminin EGF-like domains span residues 287–343, 344–413, 414–468, and 469–517; these read CICY…ECEA, CNCH…PCQP, CHCD…DCKA, and CNCS…GCDE. Asn303 carries an N-linked (GlcNAc...) asparagine glycan. Residues Asn363 and Asn380 are each glycosylated (N-linked (GlcNAc...) asparagine). 10 disulfides stabilise this stretch: Cys381/Cys390, Cys393/Cys411, Cys414/Cys426, Cys416/Cys442, Cys444/Cys453, Cys456/Cys466, Cys469/Cys482, Cys471/Cys486, Cys488/Cys497, and Cys500/Cys515. A glycan (N-linked (GlcNAc...) asparagine) is linked at Asn470. One can recognise a Laminin EGF-like 5; first part domain in the interval 518–527; that stretch reads CFCSGVSNRC. In terms of domain architecture, Laminin IV type A 1 spans 531–723; it reads YWTYGKIQDM…DGSIAAAVEV (193 aa). Residues 724–756 form the Laminin EGF-like 5; second part domain; that stretch reads CQCPPGYTGSSCESCWPRHRRVNGTIFGGICEP. Asn746 is a glycosylation site (N-linked (GlcNAc...) asparagine). 32 cysteine pairs are disulfide-bonded: Cys757/Cys766, Cys759/Cys773, Cys776/Cys785, Cys788/Cys804, Cys807/Cys822, Cys809/Cys832, Cys835/Cys844, Cys847/Cys862, Cys865/Cys879, Cys867/Cys886, Cys889/Cys898, Cys901/Cys915, Cys918/Cys930, Cys920/Cys937, Cys939/Cys948, Cys951/Cys964, Cys967/Cys979, Cys969/Cys985, Cys987/Cys996, Cys999/Cys1011, Cys1014/Cys1023, Cys1016/Cys1030, Cys1032/Cys1041, Cys1044/Cys1057, Cys1060/Cys1072, Cys1062/Cys1079, Cys1081/Cys1090, Cys1093/Cys1103, Cys1106/Cys1118, Cys1108/Cys1134, Cys1136/Cys1145, and Cys1148/Cys1163. Laminin EGF-like domains lie at 757–806, 807–864, 865–917, 918–966, 967–1013, 1014–1059, 1060–1105, and 1106–1165; these read CQCF…DCQP, CACP…SCQP, CQCN…NCQP, CRCN…GCVP, CNCN…GCTA, CECS…GCKA, CNCS…RCNL, and CDCF…GCSS. Asn1061 carries an N-linked (GlcNAc...) asparagine glycan. Positions 1166–1175 constitute a Laminin EGF-like 14; first part domain; the sequence is CYCFGTTTQC. In terms of domain architecture, Laminin IV type A 2 spans 1176-1379; the sequence is SEAKGLIRTW…MTPPADLIEK (204 aa). Residues 1380-1419 enclose the Laminin EGF-like 14; second part domain; it reads CDCPLGYSGLSCEACLPGFYRLRSQPGGRTPGPTLGTCVP. 12 cysteine pairs are disulfide-bonded: Cys1420-Cys1429, Cys1422-Cys1436, Cys1439-Cys1448, Cys1451-Cys1466, Cys1469-Cys1484, Cys1471-Cys1494, Cys1497-Cys1506, Cys1509-Cys1524, Cys1527-Cys1539, Cys1529-Cys1546, Cys1548-Cys1557, and Cys1560-Cys1571. Laminin EGF-like domains are found at residues 1420-1468, 1469-1526, and 1527-1573; these read CQCN…DCQQ, CACP…SCQE, and CECD…ECVF. Residues 1574–2144 form a domain II and I region; that stretch reads CGDECTGLLL…NQARKQANSI (571 aa). Asn1597, Asn1614, Asn1700, Asn1810, Asn1901, Asn1916, Asn1920, Asn2017, Asn2028, Asn2045, Asn2126, and Asn2240 each carry an N-linked (GlcNAc...) asparagine glycan. Residues 1630–2150 are a coiled coil; sequence ERLIQLAEGN…ANSIKVSVSS (521 aa). Laminin G-like domains lie at 2145 to 2328, 2340 to 2521, 2526 to 2710, 2763 to 2934, and 2939 to 3110; these read KVSV…CKGC, TIQF…TKGC, VYTV…IGRC, SKQF…VGTC, and QRGT…KALE. An intrachain disulfide couples Cys2302 to Cys2328. Residues Asn2360, Asn2435, and Asn2478 are each glycosylated (N-linked (GlcNAc...) asparagine). An intrachain disulfide couples Cys2495 to Cys2521. 3 N-linked (GlcNAc...) asparagine glycosylation sites follow: Asn2551, Asn2558, and Asn2648. Residues Cys2683 and Cys2710 are joined by a disulfide bond. Asn2868 and Asn2893 each carry an N-linked (GlcNAc...) asparagine glycan. Residues Cys2909 and Cys2934 are joined by a disulfide bond. Residues 3043–3060 show a composition bias toward polar residues; it reads GNQVEAQSPNPASTSADT. A disordered region spans residues 3043-3063; sequence GNQVEAQSPNPASTSADTNDP.

As to quaternary structure, laminin is a complex glycoprotein, consisting of three different polypeptide chains (alpha, beta, gamma), which are bound to each other by disulfide bonds into a cross-shaped molecule comprising one long and three short arms with globules at each end. Alpha-2 is a subunit of laminin-2 (laminin-211 or merosin), laminin-4 (laminin-221 or S-merosin) and laminin-12 (laminin-213). Interacts with FBLN1, FBLN2 and NID2. As to expression, placenta, striated muscle, peripheral nerve, cardiac muscle, pancreas, lung, spleen, kidney, adrenal gland, skin, testis, meninges, choroid plexus, and some other regions of the brain; not in liver, thymus and bone.

It localises to the secreted. Its subcellular location is the extracellular space. The protein resides in the extracellular matrix. It is found in the basement membrane. Binding to cells via a high affinity receptor, laminin is thought to mediate the attachment, migration and organization of cells into tissues during embryonic development by interacting with other extracellular matrix components. This Homo sapiens (Human) protein is Laminin subunit alpha-2 (LAMA2).